Here is a 108-residue protein sequence, read N- to C-terminus: MFTLRAASRRAFSTSIARRNLISEAYTREVRAFKAPKLSAKDAEGQVKPWSAPSAPKPPVVEGADAAELQAYAEAPVDVEGQTNSKSASPQANDEDWLAFEEEEGVAV.

Residues 1-19 constitute a mitochondrion transit peptide; that stretch reads MFTLRAASRRAFSTSIARR. 2 disordered regions span residues 40 to 60 and 75 to 108; these read AKDA…KPPV and APVD…GVAV. Low complexity predominate over residues 47–60; sequence VKPWSAPSAPKPPV. The segment covering 81–92 has biased composition (polar residues); that stretch reads GQTNSKSASPQA. Over residues 93-108 the composition is skewed to acidic residues; that stretch reads NDEDWLAFEEEEGVAV.

As to quaternary structure, F-type ATP synthases have 2 components, the catalytic core F(1) and the membrane-embedded component F(0), linked together by a central stalk and a peripheral stalk. The central stalk, also called rotor shaft, is often seen as part of F(1). The peripheral stalk is seen as part of F(0). F(0) contains the membrane channel next to the rotor. F-type ATP synthases form dimers but each monomer functions independently in ATP generation. The dimer consists of 17 different polypeptides: ATP1 (subunit alpha, 3 molecules per monomer, part of F(1)), ATP2 (subunit beta, 3 copies per monomer, part of F(1)), ATP3 (subunit gamma, part of the central stalk), ATP4 (subunit b, part of the peripheral stalk), ATP5/OSCP (subunit 5/OSCP, part of the peripheral stalk), ATP6 (subunit a, part of the peripheral stalk), ATP7 (subunit d, part of the peripheral stalk), ATP8 (subunit 8, part of the peripheral stalk), OLI1 (subunit c, part of the rotor, 10 molecules per monomer), ATP14 (subunit H, part of the peripheral stalk), ATP15 (subunit epsilon, part of the central stalk), ATP16 (subunit delta, part of the central stalk), ATP17 (subunit f, part of the peripheral stalk), ATP18 (subunit i/j, part of the peripheral stalk), ATP19 (subunit k, dimer-specific, at interface between monomers), ATP20 (subunit g, at interface between monomers), TIM11 (subunit e, at interface between monomers).

Its subcellular location is the mitochondrion inner membrane. Its function is as follows. Mitochondrial membrane ATP synthase (F(1)F(0) ATP synthase or Complex V) produces ATP from ADP in the presence of a proton gradient across the membrane which is generated by electron transport complexes of the respiratory chain. F-type ATP synthases consist of two structural domains, F(1) - containing the extramembraneous catalytic core, and F(0) - containing the membrane proton channel, linked together by a central stalk and a peripheral stalk. During catalysis, ATP synthesis in the catalytic domain of F(1) is coupled via a rotary mechanism of the central stalk subunits to proton translocation. Part of the peripheral stalk. This is ATP synthase subunit H, mitochondrial from Yarrowia lipolytica (strain CLIB 122 / E 150) (Yeast).